We begin with the raw amino-acid sequence, 521 residues long: Cytokinin dehydrogenase 9 (521 aa).

Positions 1 to 22 (MRPSLLQYLKLLLLLALGGVTT) are cleaved as a signal peptide. Asn-57 carries N-linked (GlcNAc...) asparagine glycosylation. The FAD-binding PCMH-type domain maps to 59–237 (SSFPPVAVLH…TRARIPLEPA (179 aa)). Residues Ala-95, Gly-97, and Gly-99 each coordinate FAD. The residue at position 100 (His-100) is a Pros-8alpha-FAD histidine. Residues Ser-101, Gln-105, Asp-161, Thr-166, Ser-172, Val-176, and Ile-227 each coordinate FAD. 3 N-linked (GlcNAc...) asparagine glycosylation sites follow: Asn-278, Asn-412, and Asn-418. Tyr-469 is a binding site for FAD. A glycan (N-linked (GlcNAc...) asparagine) is linked at Asn-472. Residue Gln-507 participates in FAD binding.

This sequence belongs to the oxygen-dependent FAD-linked oxidoreductase family. Monomer. FAD serves as cofactor. Expressed in inflorescence meristems.

It localises to the secreted. Its subcellular location is the extracellular space. The protein resides in the cytoplasm. The protein localises to the cytosol. It is found in the nucleus. The catalysed reaction is N(6)-dimethylallyladenine + A + H2O = 3-methyl-2-butenal + adenine + AH2. In terms of biological role, catalyzes the oxidation of cytokinins, a family of N(6)-substituted adenine derivatives that are plant hormones, where the substituent is an isopentenyl group. Possesses cytokinin oxidase activity toward trans-zeatin (tZ) and N6-(2-isopentenyl)adenine (2iP) in vitro. Functions as a primary strigolactone-responsive gene to regulate rice tillering, plant height, and panicle size, likely via a secondary response gene, RR5, which encodes a cytokinin-inducible rice type-A response regulator that seems to act as negative regulator of the cytokinin signaling. In Oryza sativa subsp. japonica (Rice), this protein is Cytokinin dehydrogenase 9.